The following is a 224-amino-acid chain: UPF0173 metal-dependent hydrolase EAT1b_0495 (224 aa).

It belongs to the UPF0173 family.

The protein is UPF0173 metal-dependent hydrolase EAT1b_0495 of Exiguobacterium sp. (strain ATCC BAA-1283 / AT1b).